The sequence spans 89 residues: Putative RING finger protein 121R (89 aa).

The RING-type zinc finger occupies Cys45–Arg78.

The protein is Putative RING finger protein 121R of Invertebrate iridescent virus 6 (IIV-6).